A 185-amino-acid chain; its full sequence is Sarcoplasmic calcium-binding proteins II, V, VI, and VII (185 aa).

4 EF-hand domains span residues 5–41 (FQKQKIKFTFDFFLDMNHDGSIQDNDFEDMMTRYKEV), 57–92 (SLEDEWRDLKGRADINKDDVVSWEEYLAMWEKTIAT), 102–137 (WCQNRIPFLFKGMDVSGDGIVDLEEFQNYCKNFQLQ), and 138–173 (CADVPAVYNVITDGGKVTFDLNRYKELYYRLLTSPA). 13 residues coordinate Ca(2+): Asp19, Asn21, Asp23, Ser25, Asp30, Asp70, Asn72, Asp74, Glu81, Asp115, Ser117, Asp119, and Glu126.

Functionally, like parvalbumins, SCPs seem to be more abundant in fast contracting muscles, but no functional relationship can be established from this distribution. This chain is Sarcoplasmic calcium-binding proteins II, V, VI, and VII, found in Branchiostoma lanceolatum (Common lancelet).